Reading from the N-terminus, the 87-residue chain is Small ribosomal subunit protein bS20 (87 aa).

The interval 1–26 (MANTKSALKRIRQTATRTARNRAVTS) is disordered. The segment covering 13–23 (QTATRTARNRA) has biased composition (low complexity).

The protein belongs to the bacterial ribosomal protein bS20 family.

In terms of biological role, binds directly to 16S ribosomal RNA. The chain is Small ribosomal subunit protein bS20 from Akkermansia muciniphila (strain ATCC BAA-835 / DSM 22959 / JCM 33894 / BCRC 81048 / CCUG 64013 / CIP 107961 / Muc).